The chain runs to 844 residues: 3',5'-cyclic-AMP phosphodiesterase 4A (844 aa).

The segment at 1-124 (MEPPAAPSER…RSPLDSQASP (124 aa)) is disordered. Ser-13 bears the Phosphoserine mark. Positions 36–46 (QPRTPIRIQQR) are enriched in low complexity. Positions 51 to 78 (SAERSEPERSPHRPIERADAVDTGDRPG) are enriched in basic and acidic residues. The segment covering 82–91 (TRMSWPSSFH) has biased composition (polar residues). Phosphoserine is present on residues Ser-147, Ser-152, Ser-160, Ser-204, and Ser-333. The 330-residue stretch at 343–672 (VKTDQEDLLA…DWYHSAIRQS (330 aa)) folds into the PDEase domain. Lys-344 is covalently cross-linked (Glycyl lysine isopeptide (Lys-Gly) (interchain with G-Cter in SUMO)). The active-site Proton donor is the His-419. Residue His-419 participates in 3',5'-cyclic AMP binding. The AMP site is built by His-419 and His-423. Positions 423, 459, 460, and 577 each coordinate Zn(2+). AMP is bound by residues Asp-460, Asp-577, Gln-628, and Phe-631. Asp-460 provides a ligand contact to Mg(2+). Asp-460 is a Mn(2+) binding site. The 3',5'-cyclic AMP site is built by Gln-628 and Phe-631. A phosphoserine mark is found at Ser-672 and Ser-674. The interval 819–844 (ACSGTSGDNSAVISAPGRWGSGGDPA) is disordered. The span at 820 to 830 (CSGTSGDNSAV) shows a compositional bias: polar residues.

The protein belongs to the cyclic nucleotide phosphodiesterase family. PDE4 subfamily. In terms of assembly, interacts with LYN (via SH3 domain). Interacts with ARRB2. The cofactor is Zn(2+). Requires Mg(2+) as cofactor. Mn(2+) serves as cofactor. Proteolytically cleaved by CASP3.

Its subcellular location is the cytoplasm. The protein resides in the cytosol. It is found in the membrane. The enzyme catalyses 3',5'-cyclic AMP + H2O = AMP + H(+). The protein operates within purine metabolism; 3',5'-cyclic AMP degradation; AMP from 3',5'-cyclic AMP: step 1/1. Inhibited by rolipram and diazepam. Its function is as follows. Hydrolyzes the second messenger 3',5'-cyclic AMP (cAMP), which is a key regulator of many important physiological processes. In terms of biological role, efficiently hydrolyzes cAMP. This Mus musculus (Mouse) protein is 3',5'-cyclic-AMP phosphodiesterase 4A (Pde4a).